The chain runs to 410 residues: S-adenosylmethionine synthase (410 aa).

H15 is an ATP binding site. Mg(2+) is bound at residue D17. E43 contacts K(+). Residues E56 and Q100 each contribute to the L-methionine site. Residues 100-110 (QSPDIAKGVDT) are flexible loop. Residues 171–173 (DGK), 248–249 (KF), D257, 263–264 (RK), A280, and K284 contribute to the ATP site. Residue D257 participates in L-methionine binding. K288 provides a ligand contact to L-methionine.

Belongs to the AdoMet synthase family. As to quaternary structure, homotetramer; dimer of dimers. Mg(2+) serves as cofactor. Requires K(+) as cofactor.

Its subcellular location is the cytoplasm. It carries out the reaction L-methionine + ATP + H2O = S-adenosyl-L-methionine + phosphate + diphosphate. The protein operates within amino-acid biosynthesis; S-adenosyl-L-methionine biosynthesis; S-adenosyl-L-methionine from L-methionine: step 1/1. Its function is as follows. Catalyzes the formation of S-adenosylmethionine (AdoMet) from methionine and ATP. The overall synthetic reaction is composed of two sequential steps, AdoMet formation and the subsequent tripolyphosphate hydrolysis which occurs prior to release of AdoMet from the enzyme. The sequence is that of S-adenosylmethionine synthase from Prochlorococcus marinus (strain MIT 9211).